The sequence spans 112 residues: T cell receptor alpha variable 2 (112 aa).

Positions 1–25 are cleaved as a signal peptide; it reads MALQSTLGAVWLGLLLNSLWKVAES. The 87-residue stretch at 26-112 folds into the Ig-like domain; that stretch reads KDQVFQPSTV…DAAVYYCAVE (87 aa). C47 and C109 are oxidised to a cystine. N-linked (GlcNAc...) asparagine glycans are attached at residues N48 and N84.

Alpha-beta TR is a heterodimer composed of an alpha and beta chain; disulfide-linked. The alpha-beta TR is associated with the transmembrane signaling CD3 coreceptor proteins to form the TR-CD3 (TcR or TCR). The assembly of alpha-beta TR heterodimers with CD3 occurs in the endoplasmic reticulum where a single alpha-beta TR heterodimer associates with one CD3D-CD3E heterodimer, one CD3G-CD3E heterodimer and one CD247 homodimer forming a stable octameric structure. CD3D-CD3E and CD3G-CD3E heterodimers preferentially associate with TR alpha and TR beta chains, respectively. The association of the CD247 homodimer is the last step of TcR assembly in the endoplasmic reticulum and is required for transport to the cell surface.

It is found in the cell membrane. V region of the variable domain of T cell receptor (TR) alpha chain that participates in the antigen recognition. Alpha-beta T cell receptors are antigen specific receptors which are essential to the immune response and are present on the cell surface of T lymphocytes. Recognize peptide-major histocompatibility (MH) (pMH) complexes that are displayed by antigen presenting cells (APC), a prerequisite for efficient T cell adaptive immunity against pathogens. Binding of alpha-beta TR to pMH complex initiates TR-CD3 clustering on the cell surface and intracellular activation of LCK that phosphorylates the ITAM motifs of CD3G, CD3D, CD3E and CD247 enabling the recruitment of ZAP70. In turn ZAP70 phosphorylates LAT, which recruits numerous signaling molecules to form the LAT signalosome. The LAT signalosome propagates signal branching to three major signaling pathways, the calcium, the mitogen-activated protein kinase (MAPK) kinase and the nuclear factor NF-kappa-B (NF-kB) pathways, leading to the mobilization of transcription factors that are critical for gene expression and essential for T cell growth and differentiation. The T cell repertoire is generated in the thymus, by V-(D)-J rearrangement. This repertoire is then shaped by intrathymic selection events to generate a peripheral T cell pool of self-MH restricted, non-autoaggressive T cells. Post-thymic interaction of alpha-beta TR with the pMH complexes shapes TR structural and functional avidity. The chain is T cell receptor alpha variable 2 from Homo sapiens (Human).